A 395-amino-acid polypeptide reads, in one-letter code: D-alanine--D-alanine ligase (395 aa).

One can recognise an ATP-grasp domain in the interval lysine 172 to glutamate 391. Residue aspartate 204–glutamate 266 participates in ATP binding. The Mg(2+) site is built by aspartate 345, glutamate 358, and asparagine 360.

It belongs to the D-alanine--D-alanine ligase family. Mg(2+) serves as cofactor. Mn(2+) is required as a cofactor.

Its subcellular location is the cytoplasm. The enzyme catalyses 2 D-alanine + ATP = D-alanyl-D-alanine + ADP + phosphate + H(+). The protein operates within cell wall biogenesis; peptidoglycan biosynthesis. Its function is as follows. Cell wall formation. This Bifidobacterium longum subsp. infantis (strain ATCC 15697 / DSM 20088 / JCM 1222 / NCTC 11817 / S12) protein is D-alanine--D-alanine ligase.